The sequence spans 182 residues: MIQTLDRLMTNPMPEGRVEDILRPEGENPLLEKGYVTTSVDALLNWARTGSMWPMTFGLACCAVEMMHAGASRLDLDRYGVVFRPSPRQSDVMIVAGTLVNKMAPALRKVYDQMPDPKWVISMGSCANGGGYYHYSYSVVRGCDRIVPVDIYVPGCPPTAEALVYGILQLQKKIWRTQTIAR.

Residues cysteine 61, cysteine 62, cysteine 126, and cysteine 156 each coordinate [4Fe-4S] cluster.

It belongs to the complex I 20 kDa subunit family. As to quaternary structure, NDH-1 is composed of 14 different subunits. Subunits NuoB, C, D, E, F, and G constitute the peripheral sector of the complex. It depends on [4Fe-4S] cluster as a cofactor.

It is found in the cell inner membrane. The enzyme catalyses a quinone + NADH + 5 H(+)(in) = a quinol + NAD(+) + 4 H(+)(out). NDH-1 shuttles electrons from NADH, via FMN and iron-sulfur (Fe-S) centers, to quinones in the respiratory chain. The immediate electron acceptor for the enzyme in this species is believed to be ubiquinone. Couples the redox reaction to proton translocation (for every two electrons transferred, four hydrogen ions are translocated across the cytoplasmic membrane), and thus conserves the redox energy in a proton gradient. The protein is NADH-quinone oxidoreductase subunit B of Xanthomonas oryzae pv. oryzae (strain PXO99A).